Reading from the N-terminus, the 345-residue chain is Heat-inducible transcription repressor HrcA (345 aa).

Belongs to the HrcA family.

In terms of biological role, negative regulator of class I heat shock genes (grpE-dnaK-dnaJ and groELS operons). Prevents heat-shock induction of these operons. This is Heat-inducible transcription repressor HrcA from Dehalococcoides mccartyi (strain ATCC BAA-2266 / KCTC 15142 / 195) (Dehalococcoides ethenogenes (strain 195)).